A 500-amino-acid chain; its full sequence is NAD(P)H-quinone oxidoreductase chain 4, chloroplastic (500 aa).

The next 14 membrane-spanning stretches (helical) occupy residues 4-24 (FPWL…MLFL), 35-55 (YTIC…CYNF), 87-107 (IGTI…AFPV), 113-130 (LFHF…GSFS), 134-154 (LLLF…LLSM), 167-187 (FILY…GISL), 211-231 (ILFY…IPLH), 242-262 (HYST…YGLV), 272-292 (AHSL…IYAA), 305-325 (IAYS…SITD), 330-350 (GAIL…FLAG), 386-406 (LALP…GIIT), 416-436 (ILII…LLSM), and 462-482 (LFLS…PDFV).

It belongs to the complex I subunit 4 family.

It localises to the plastid. The protein resides in the chloroplast thylakoid membrane. The catalysed reaction is a plastoquinone + NADH + (n+1) H(+)(in) = a plastoquinol + NAD(+) + n H(+)(out). It catalyses the reaction a plastoquinone + NADPH + (n+1) H(+)(in) = a plastoquinol + NADP(+) + n H(+)(out). This Draba nemorosa (Woodland whitlowgrass) protein is NAD(P)H-quinone oxidoreductase chain 4, chloroplastic.